Reading from the N-terminus, the 320-residue chain is Nod factor export ATP-binding protein I (320 aa).

Residues 15-245 (VSATGVWKKR…LGALKILEID (231 aa)) enclose the ABC transporter domain. 47–54 (GTNGAGKS) contacts ATP.

The protein belongs to the ABC transporter superfamily. Lipooligosaccharide exporter (TC 3.A.1.102) family. The complex is composed of two ATP-binding proteins (NodI) and two transmembrane proteins (NodJ).

It is found in the cell inner membrane. In terms of biological role, part of the ABC transporter complex NodIJ involved in the export of the nodulation factors (Nod factors), the bacterial signal molecules that induce symbiosis and subsequent nodulation induction. Nod factors are LCO (lipo-chitin oligosaccharide), a modified beta-1,4-linked N-acetylglucosamine oligosaccharide. This subunit is responsible for energy coupling to the transport system. The protein is Nod factor export ATP-binding protein I of Azorhizobium caulinodans (strain ATCC 43989 / DSM 5975 / JCM 20966 / LMG 6465 / NBRC 14845 / NCIMB 13405 / ORS 571).